The primary structure comprises 613 residues: Chaperone protein DnaK (613 aa).

Residues 579–613 (MYQSASSTTQTGSGNQNSSKQENDKTVDAEYKEKS) form a disordered region. A compositionally biased stretch (low complexity) spans 581–597 (QSASSTTQTGSGNQNSS). Over residues 599 to 613 (QENDKTVDAEYKEKS) the composition is skewed to basic and acidic residues.

It belongs to the heat shock protein 70 family.

Acts as a chaperone. The chain is Chaperone protein DnaK from Thermoplasma volcanium (strain ATCC 51530 / DSM 4299 / JCM 9571 / NBRC 15438 / GSS1).